Consider the following 300-residue polypeptide: Cell shape-determining protein MreC (300 aa).

The Cytoplasmic segment spans residues 1 to 17; the sequence is MARDRTRPEDFTRPLRR. The chain crosses the membrane as a helical span at residues 18 to 38; that stretch reads ILVGGLVLLLLGIFLIWRIDS. Topologically, residues 39–300 are periplasmic; that stretch reads PRVEQFRAAL…APAAVEGADG (262 aa). The stretch at 74–117 forms a coiled coil; it reads QSYTRIYEQNQELRRELQQMKAWKEAALQLEQKNARLLDLNQVR. A disordered region spans residues 277–300; that stretch reads SDPGKLVAEPPAPPAPAAVEGADG.

The protein belongs to the MreC family.

The protein resides in the cell inner membrane. Involved in formation and maintenance of cell shape. This is Cell shape-determining protein MreC from Cereibacter sphaeroides (Rhodobacter sphaeroides).